We begin with the raw amino-acid sequence, 446 residues long: NADH-ubiquinone oxidoreductase chain 4 (446 aa).

13 helical membrane passes run 4-24 (IIFF…YWMV), 56-76 (MLSY…LLAS), 93-113 (IIIL…FMFY), 114-134 (LFFE…GYQP), 139-159 (AGLY…IGIF), 182-202 (LLYF…LVHL), 218-238 (ILAG…ISFL), 245-265 (YSFV…LVCL), 272-292 (ALIA…LLTM), 297-317 (LCGS…LFCL), 330-350 (MLIN…WFLL), 373-393 (IVSW…FSAA), and 426-446 (LLHW…MLWL).

The protein belongs to the complex I subunit 4 family.

The protein resides in the mitochondrion membrane. It carries out the reaction a ubiquinone + NADH + 5 H(+)(in) = a ubiquinol + NAD(+) + 4 H(+)(out). Its function is as follows. Core subunit of the mitochondrial membrane respiratory chain NADH dehydrogenase (Complex I) that is believed to belong to the minimal assembly required for catalysis. Complex I functions in the transfer of electrons from NADH to the respiratory chain. The immediate electron acceptor for the enzyme is believed to be ubiquinone. In Drosophila melanogaster (Fruit fly), this protein is NADH-ubiquinone oxidoreductase chain 4 (mt:ND4).